The primary structure comprises 245 residues: Venom nerve growth factor 1 (245 aa).

An N-terminal signal peptide occupies residues 1–18 (MSMLCYTLIIAFLIGIWA). A propeptide spanning residues 19–125 (APKSEDNVPL…ALNRNIRAKR (107 aa)) is cleaved from the precursor. Residues 47–66 (GLKTSRNTDQRHPAPKKAED) show a composition bias toward basic and acidic residues. Positions 47–69 (GLKTSRNTDQRHPAPKKAEDQEL) are disordered. 3 disulfide bridges follow: cysteine 139/cysteine 206, cysteine 182/cysteine 234, and cysteine 194/cysteine 236. Asparagine 148 and asparagine 151 each carry an N-linked (GlcNAc...) asparagine glycan.

Belongs to the NGF-beta family. Homodimer; non-covalently linked. Expressed by the venom gland.

The protein resides in the secreted. Functionally, nerve growth factor is important for the development and maintenance of the sympathetic and sensory nervous systems. It stimulates division and differentiation of sympathetic and embryonic sensory neurons as well as basal forebrain cholinergic neurons in the brain. Its relevance in the snake venom is not clear. However, it has been shown to inhibit metalloproteinase-dependent proteolysis of platelet glycoprotein Ib alpha, suggesting a metalloproteinase inhibition to prevent metalloprotease autodigestion and/or protection against prey proteases. Binds a lipid between the two protein chains in the homodimer. The lipid-bound form promotes histamine relase from mouse mast cells, contrary to the lipid-free form. The sequence is that of Venom nerve growth factor 1 from Tropidechis carinatus (Australian rough-scaled snake).